Reading from the N-terminus, the 63-residue chain is Large ribosomal subunit protein bL28 (63 aa).

The protein belongs to the bacterial ribosomal protein bL28 family.

The chain is Large ribosomal subunit protein bL28 from Brachyspira hyodysenteriae (strain ATCC 49526 / WA1).